A 521-amino-acid polypeptide reads, in one-letter code: MIKQALISVSDKTGIVDFAKSLSDLGVKLLSTGGTAKLLADAGLPVTEVADYTGFPEMLDGRVKTLHPKVHGGILARRDLPEHMQALEQHGIPTIDLLVVNLYPFVATIAKDDCTLADAIENIDIGGPTMLRSAAKNHRDVTVVVDPADYAVVLDEMKANGNTVGYPTNFRLATKVFAHTAQYDGAITNYLTSLTDELQHASRSTYPATLNLAFDKVQDLRYGENPHQSAAFYRDLATPAGALANYRQLQGKELSYNNIADSDAAWECVKTFDAPACVIIKHANPCGVAVGNDSADAYAKAFQTDPTSAFGGIIAFNREVDEAAAQAVAKQFVEVLIAPSFSDAAKQVFAAKQNVRLLEIALGDGHNAFDLKRVGGGLLVQSLDSRNVQPSELRVVTKRQPTAKEMDDLLFAWRVAKYVKSNAIVFCGNGMTLGVGAGQMSRVDSARIASIKAQNAGLTLAGSAVASDAFFPFRDGLDVVVAAGATCVIQPGGSMRDDEVIAAADEHGIAMVLTGVRHFRH.

An MGS-like domain is found at 1-145; that stretch reads MIKQALISVS…KNHRDVTVVV (145 aa).

This sequence belongs to the PurH family.

The catalysed reaction is (6R)-10-formyltetrahydrofolate + 5-amino-1-(5-phospho-beta-D-ribosyl)imidazole-4-carboxamide = 5-formamido-1-(5-phospho-D-ribosyl)imidazole-4-carboxamide + (6S)-5,6,7,8-tetrahydrofolate. The enzyme catalyses IMP + H2O = 5-formamido-1-(5-phospho-D-ribosyl)imidazole-4-carboxamide. Its pathway is purine metabolism; IMP biosynthesis via de novo pathway; 5-formamido-1-(5-phospho-D-ribosyl)imidazole-4-carboxamide from 5-amino-1-(5-phospho-D-ribosyl)imidazole-4-carboxamide (10-formyl THF route): step 1/1. It functions in the pathway purine metabolism; IMP biosynthesis via de novo pathway; IMP from 5-formamido-1-(5-phospho-D-ribosyl)imidazole-4-carboxamide: step 1/1. The sequence is that of Bifunctional purine biosynthesis protein PurH from Burkholderia orbicola (strain MC0-3).